The chain runs to 154 residues: Endoribonuclease YbeY (154 aa).

Positions 120, 124, and 130 each coordinate Zn(2+).

The protein belongs to the endoribonuclease YbeY family. The cofactor is Zn(2+).

The protein resides in the cytoplasm. Functionally, single strand-specific metallo-endoribonuclease involved in late-stage 70S ribosome quality control and in maturation of the 3' terminus of the 16S rRNA. This chain is Endoribonuclease YbeY, found in Leptospira biflexa serovar Patoc (strain Patoc 1 / Ames).